The primary structure comprises 483 residues: Aspartyl/glutamyl-tRNA(Asn/Gln) amidotransferase subunit B (483 aa).

Belongs to the GatB/GatE family. GatB subfamily. In terms of assembly, heterotrimer of A, B and C subunits.

It carries out the reaction L-glutamyl-tRNA(Gln) + L-glutamine + ATP + H2O = L-glutaminyl-tRNA(Gln) + L-glutamate + ADP + phosphate + H(+). The enzyme catalyses L-aspartyl-tRNA(Asn) + L-glutamine + ATP + H2O = L-asparaginyl-tRNA(Asn) + L-glutamate + ADP + phosphate + 2 H(+). Functionally, allows the formation of correctly charged Asn-tRNA(Asn) or Gln-tRNA(Gln) through the transamidation of misacylated Asp-tRNA(Asn) or Glu-tRNA(Gln) in organisms which lack either or both of asparaginyl-tRNA or glutaminyl-tRNA synthetases. The reaction takes place in the presence of glutamine and ATP through an activated phospho-Asp-tRNA(Asn) or phospho-Glu-tRNA(Gln). The chain is Aspartyl/glutamyl-tRNA(Asn/Gln) amidotransferase subunit B from Roseiflexus castenholzii (strain DSM 13941 / HLO8).